The primary structure comprises 557 residues: Dihydroxy-acid dehydratase (557 aa).

Cys-50 provides a ligand contact to [2Fe-2S] cluster. Asp-82 provides a ligand contact to Mg(2+). Cys-123 serves as a coordination point for [2Fe-2S] cluster. 2 residues coordinate Mg(2+): Asp-124 and Lys-125. The residue at position 125 (Lys-125) is an N6-carboxylysine. Position 195 (Cys-195) interacts with [2Fe-2S] cluster. Glu-447 lines the Mg(2+) pocket. Ser-473 serves as the catalytic Proton acceptor.

This sequence belongs to the IlvD/Edd family. Homodimer. Requires [2Fe-2S] cluster as cofactor. It depends on Mg(2+) as a cofactor.

It catalyses the reaction (2R)-2,3-dihydroxy-3-methylbutanoate = 3-methyl-2-oxobutanoate + H2O. It carries out the reaction (2R,3R)-2,3-dihydroxy-3-methylpentanoate = (S)-3-methyl-2-oxopentanoate + H2O. It functions in the pathway amino-acid biosynthesis; L-isoleucine biosynthesis; L-isoleucine from 2-oxobutanoate: step 3/4. The protein operates within amino-acid biosynthesis; L-valine biosynthesis; L-valine from pyruvate: step 3/4. Its function is as follows. Functions in the biosynthesis of branched-chain amino acids. Catalyzes the dehydration of (2R,3R)-2,3-dihydroxy-3-methylpentanoate (2,3-dihydroxy-3-methylvalerate) into 2-oxo-3-methylpentanoate (2-oxo-3-methylvalerate) and of (2R)-2,3-dihydroxy-3-methylbutanoate (2,3-dihydroxyisovalerate) into 2-oxo-3-methylbutanoate (2-oxoisovalerate), the penultimate precursor to L-isoleucine and L-valine, respectively. The chain is Dihydroxy-acid dehydratase from Nitrosospira multiformis (strain ATCC 25196 / NCIMB 11849 / C 71).